A 176-amino-acid chain; its full sequence is ATP-dependent protease subunit HslV (176 aa).

Residue threonine 5 is part of the active site. Na(+) is bound by residues glycine 161, cysteine 164, and threonine 167.

It belongs to the peptidase T1B family. HslV subfamily. As to quaternary structure, a double ring-shaped homohexamer of HslV is capped on each side by a ring-shaped HslU homohexamer. The assembly of the HslU/HslV complex is dependent on binding of ATP.

Its subcellular location is the cytoplasm. It carries out the reaction ATP-dependent cleavage of peptide bonds with broad specificity.. Allosterically activated by HslU binding. In terms of biological role, protease subunit of a proteasome-like degradation complex believed to be a general protein degrading machinery. This chain is ATP-dependent protease subunit HslV, found in Wolinella succinogenes (strain ATCC 29543 / DSM 1740 / CCUG 13145 / JCM 31913 / LMG 7466 / NCTC 11488 / FDC 602W) (Vibrio succinogenes).